A 331-amino-acid chain; its full sequence is Phosphate acyltransferase (331 aa).

The protein belongs to the PlsX family. In terms of assembly, homodimer. Probably interacts with PlsY.

It is found in the cytoplasm. The enzyme catalyses a fatty acyl-[ACP] + phosphate = an acyl phosphate + holo-[ACP]. The protein operates within lipid metabolism; phospholipid metabolism. In terms of biological role, catalyzes the reversible formation of acyl-phosphate (acyl-PO(4)) from acyl-[acyl-carrier-protein] (acyl-ACP). This enzyme utilizes acyl-ACP as fatty acyl donor, but not acyl-CoA. The chain is Phosphate acyltransferase from Clostridium acetobutylicum (strain ATCC 824 / DSM 792 / JCM 1419 / IAM 19013 / LMG 5710 / NBRC 13948 / NRRL B-527 / VKM B-1787 / 2291 / W).